A 900-amino-acid chain; its full sequence is Alanine--tRNA ligase (900 aa).

4 residues coordinate Zn(2+): His587, His591, Cys691, and His695.

The protein belongs to the class-II aminoacyl-tRNA synthetase family. It depends on Zn(2+) as a cofactor.

It is found in the cytoplasm. The catalysed reaction is tRNA(Ala) + L-alanine + ATP = L-alanyl-tRNA(Ala) + AMP + diphosphate. Catalyzes the attachment of alanine to tRNA(Ala) in a two-step reaction: alanine is first activated by ATP to form Ala-AMP and then transferred to the acceptor end of tRNA(Ala). Also edits incorrectly charged Ser-tRNA(Ala) and Gly-tRNA(Ala) via its editing domain. This is Alanine--tRNA ligase from Aeropyrum pernix (strain ATCC 700893 / DSM 11879 / JCM 9820 / NBRC 100138 / K1).